A 1242-amino-acid chain; its full sequence is ATP-dependent helicase/nuclease subunit A (1242 aa).

Residues 12–487 (SRWTDEQWKA…IDLASNFRSR (476 aa)) enclose the UvrD-like helicase ATP-binding domain. 33-40 (AAAGSGKT) contacts ATP. Positions 514–808 (AAQLKYGADY…RIMTIHSSKG (295 aa)) constitute a UvrD-like helicase C-terminal domain.

It belongs to the helicase family. AddA subfamily. Heterodimer of AddA and AddB/RexB. Requires Mg(2+) as cofactor.

The catalysed reaction is Couples ATP hydrolysis with the unwinding of duplex DNA by translocating in the 3'-5' direction.. It carries out the reaction ATP + H2O = ADP + phosphate + H(+). Functionally, the heterodimer acts as both an ATP-dependent DNA helicase and an ATP-dependent, dual-direction single-stranded exonuclease. Recognizes the chi site generating a DNA molecule suitable for the initiation of homologous recombination. The AddA nuclease domain is required for chi fragment generation; this subunit has the helicase and 3' -&gt; 5' nuclease activities. The protein is ATP-dependent helicase/nuclease subunit A of Geobacillus kaustophilus (strain HTA426).